A 159-amino-acid polypeptide reads, in one-letter code: ATP synthase subunit b (159 aa).

Residues 4-24 (VGINGTLIVQLVTFVILVALL) form a helical membrane-spanning segment.

It belongs to the ATPase B chain family. In terms of assembly, F-type ATPases have 2 components, F(1) - the catalytic core - and F(0) - the membrane proton channel. F(1) has five subunits: alpha(3), beta(3), gamma(1), delta(1), epsilon(1). F(0) has three main subunits: a(1), b(2) and c(10-14). The alpha and beta chains form an alternating ring which encloses part of the gamma chain. F(1) is attached to F(0) by a central stalk formed by the gamma and epsilon chains, while a peripheral stalk is formed by the delta and b chains.

It is found in the cell inner membrane. Functionally, f(1)F(0) ATP synthase produces ATP from ADP in the presence of a proton or sodium gradient. F-type ATPases consist of two structural domains, F(1) containing the extramembraneous catalytic core and F(0) containing the membrane proton channel, linked together by a central stalk and a peripheral stalk. During catalysis, ATP synthesis in the catalytic domain of F(1) is coupled via a rotary mechanism of the central stalk subunits to proton translocation. Component of the F(0) channel, it forms part of the peripheral stalk, linking F(1) to F(0). This Acidithiobacillus ferridurans protein is ATP synthase subunit b.